Consider the following 440-residue polypeptide: Cytochrome b (440 aa).

Residues 46-66 (IWGIVLAFCLVLQIATGIVLV) form a helical membrane-spanning segment. 2 residues coordinate heme b: H97 and H111. The next 9 membrane-spanning stretches (helical) occupy residues 100–120 (GASL…YYGS), 129–149 (WIVG…GYVL), 156–176 (FWGA…GEAI), 194–214 (FFSL…VHIW), 253–273 (LFAL…MPNY), 296–315 (WYFL…VWVV), 330–350 (FFGV…PWLD), 365–385 (WWFW…AMPA), and 394–414 (LAGS…LGII). H198 and H212 together coordinate heme b.

The protein belongs to the cytochrome b family. In terms of assembly, the main subunits of complex b-c1 are: cytochrome b, cytochrome c1 and the Rieske protein. Heme b is required as a cofactor.

It localises to the cell membrane. Component of the ubiquinol-cytochrome c reductase complex (complex III or cytochrome b-c1 complex), which is a respiratory chain that generates an electrochemical potential coupled to ATP synthesis. The sequence is that of Cytochrome b (petB) from Paracoccus denitrificans.